The following is a 65-amino-acid chain: VRDGYIADDKDCAYFCGRNAYCDEECKKGAESGKCWYAGQYGNACWCYKLPDWVPIKQKVSGKCN.

The LCN-type CS-alpha/beta domain occupies 2 to 65 (RDGYIADDKD…IKQKVSGKCN (64 aa)). Intrachain disulfides connect Cys12-Cys64, Cys16-Cys35, Cys22-Cys45, and Cys26-Cys47.

This sequence belongs to the long (4 C-C) scorpion toxin superfamily. Sodium channel inhibitor family. Alpha subfamily. In terms of tissue distribution, expressed by the venom gland.

It is found in the secreted. Its function is as follows. Alpha toxins bind voltage-independently at site-3 of sodium channels (Nav) and inhibit the inactivation of the activated channels, thereby blocking neuronal transmission. Has paralytic activity in mice. In Mesobuthus eupeus (Lesser Asian scorpion), this protein is Alpha-toxin BeM10.